Here is a 305-residue protein sequence, read N- to C-terminus: 17-beta-hydroxysteroid dehydrogenase type 3 (305 aa).

44–73 (GQWAVITGAGDGIGKAYSFELARHGLNVVL) contacts NADP(+). Ser-181 provides a ligand contact to substrate. Tyr-194 acts as the Proton acceptor in catalysis.

This sequence belongs to the short-chain dehydrogenases/reductases (SDR) family. 17-beta-HSD 3 subfamily. As to expression, expressed in the testes.

Its subcellular location is the endoplasmic reticulum. It carries out the reaction a 17beta-hydroxy steroid + NADP(+) = a 17-oxo steroid + NADPH + H(+). The catalysed reaction is testosterone + NADP(+) = androst-4-ene-3,17-dione + NADPH + H(+). The enzyme catalyses 17beta-estradiol + NADP(+) = estrone + NADPH + H(+). It catalyses the reaction 3beta-hydroxyandrost-5-en-17-one + NADPH + H(+) = androst-5-en-3beta,17beta-diol + NADP(+). It carries out the reaction 17beta-hydroxy-5alpha-androstan-3-one + NADP(+) = 5alpha-androstan-3,17-dione + NADPH + H(+). The catalysed reaction is androsterone + NADPH + H(+) = 5alpha-androstane-3alpha,17beta-diol + NADP(+). The enzyme catalyses 3beta-hydroxy-5alpha-androstan-17-one + NADPH + H(+) = 5alpha-androstane-3beta,17beta-diol + NADP(+). It catalyses the reaction androst-4-ene-3,11,17-trione + NADPH + H(+) = 17beta-hydroxyandrost-4-ene-3,11-dione + NADP(+). It carries out the reaction 11beta-hydroxyandrost-4-ene-3,17-dione + NADPH + H(+) = 11beta,17beta-dihydroxyandrost-4-ene-3-one + NADP(+). The protein operates within hormone biosynthesis; testosterone biosynthesis. It participates in steroid metabolism. Its function is as follows. Catalyzes the conversion of 17-oxosteroids to 17beta-hydroxysteroids. Favors the reduction of androstenedione to testosterone. Testosterone is the key androgen driving male development and function. Uses NADPH while the two other EDH17B enzymes use NADH. Androgens such as epiandrosterone, dehydroepiandrosterone, androsterone and androstanedione are accepted as substrates and reduced at C-17. Can reduce 11-ketoandrostenedione as well as 11beta-hydroxyandrostenedione at C-17 to the respective testosterone forms. Plays a role in the rate-limiting-step for the maximum level of testosterone production by the testis but does not affect basal testosterone production. The chain is 17-beta-hydroxysteroid dehydrogenase type 3 from Mus musculus (Mouse).